Reading from the N-terminus, the 487-residue chain is N-succinylglutamate 5-semialdehyde dehydrogenase (487 aa).

Glycine 221 to glycine 226 contributes to the NAD(+) binding site. Residues glutamate 244 and cysteine 278 contribute to the active site.

It belongs to the aldehyde dehydrogenase family. AstD subfamily.

The enzyme catalyses N-succinyl-L-glutamate 5-semialdehyde + NAD(+) + H2O = N-succinyl-L-glutamate + NADH + 2 H(+). It functions in the pathway amino-acid degradation; L-arginine degradation via AST pathway; L-glutamate and succinate from L-arginine: step 4/5. Catalyzes the NAD-dependent reduction of succinylglutamate semialdehyde into succinylglutamate. The sequence is that of N-succinylglutamate 5-semialdehyde dehydrogenase from Burkholderia pseudomallei (strain 1106a).